Reading from the N-terminus, the 226-residue chain is Leucyl/phenylalanyl-tRNA--protein transferase (226 aa).

It belongs to the L/F-transferase family.

It localises to the cytoplasm. The catalysed reaction is N-terminal L-lysyl-[protein] + L-leucyl-tRNA(Leu) = N-terminal L-leucyl-L-lysyl-[protein] + tRNA(Leu) + H(+). It carries out the reaction N-terminal L-arginyl-[protein] + L-leucyl-tRNA(Leu) = N-terminal L-leucyl-L-arginyl-[protein] + tRNA(Leu) + H(+). It catalyses the reaction L-phenylalanyl-tRNA(Phe) + an N-terminal L-alpha-aminoacyl-[protein] = an N-terminal L-phenylalanyl-L-alpha-aminoacyl-[protein] + tRNA(Phe). Functions in the N-end rule pathway of protein degradation where it conjugates Leu, Phe and, less efficiently, Met from aminoacyl-tRNAs to the N-termini of proteins containing an N-terminal arginine or lysine. The chain is Leucyl/phenylalanyl-tRNA--protein transferase from Pseudomonas aeruginosa (strain ATCC 15692 / DSM 22644 / CIP 104116 / JCM 14847 / LMG 12228 / 1C / PRS 101 / PAO1).